Consider the following 285-residue polypeptide: 2-dehydro-3-deoxyphosphooctonate aldolase (285 aa).

It belongs to the KdsA family.

The protein resides in the cytoplasm. The catalysed reaction is D-arabinose 5-phosphate + phosphoenolpyruvate + H2O = 3-deoxy-alpha-D-manno-2-octulosonate-8-phosphate + phosphate. It functions in the pathway carbohydrate biosynthesis; 3-deoxy-D-manno-octulosonate biosynthesis; 3-deoxy-D-manno-octulosonate from D-ribulose 5-phosphate: step 2/3. The protein operates within bacterial outer membrane biogenesis; lipopolysaccharide biosynthesis. The sequence is that of 2-dehydro-3-deoxyphosphooctonate aldolase from Leptothrix cholodnii (strain ATCC 51168 / LMG 8142 / SP-6) (Leptothrix discophora (strain SP-6)).